The sequence spans 579 residues: Kelch repeat and BTB domain-containing protein F47D12.7 (579 aa).

The BTB domain occupies Pro51 to Pro119. 6 Kelch repeats span residues Ala266 to Asp316, Lys317 to Asp363, Leu369 to Asn415, Ile417 to Asn463, Val465 to Thr511, and Tyr513 to Asp559.

The polypeptide is Kelch repeat and BTB domain-containing protein F47D12.7 (Caenorhabditis elegans).